The chain runs to 109 residues: Glutaredoxin-C13 (109 aa).

Positions 2 to 108 (AEMVARLASE…PMLKNAGALW (107 aa)) constitute a Glutaredoxin domain. Residues cysteine 22 and cysteine 25 are joined by a disulfide bond. Positions 106–109 (ALWL) match the Responsive for interaction with TGA factors motif.

This sequence belongs to the glutaredoxin family. CC-type subfamily.

The protein resides in the cytoplasm. Its subcellular location is the nucleus. Its function is as follows. Has a glutathione-disulfide oxidoreductase activity in the presence of NADPH and glutathione reductase. Reduces low molecular weight disulfides and proteins. The protein is Glutaredoxin-C13 (GRXC13) of Oryza sativa subsp. japonica (Rice).